The chain runs to 403 residues: Beta-galactoside alpha-2,6-sialyltransferase 1 (403 aa).

The Cytoplasmic segment spans residues 1–9 (MIHTNLKRK). The helical; Signal-anchor for type II membrane protein transmembrane segment at 10–26 (FSCFVLVFLLFAIICVW) threads the bilayer. Over 27-403 (KKGSDYEALT…TLSGFRNNRC (377 aa)) the chain is Lumenal. Intrachain disulfides connect cysteine 139–cysteine 403, cysteine 181–cysteine 332, and cysteine 350–cysteine 361. 2 N-linked (GlcNAc...) asparagine glycosylation sites follow: asparagine 146 and asparagine 158. Residues serine 186, asparagine 209, asparagine 230, 319 to 321 (SSG), cysteine 350, tyrosine 351, threonine 362, tyrosine 366, histidine 367, and lysine 373 contribute to the substrate site. A Phosphotyrosine modification is found at tyrosine 366.

This sequence belongs to the glycosyltransferase 29 family. As to quaternary structure, monomer and homodimer. In terms of processing, N-glycosylated.

It is found in the golgi apparatus. The protein localises to the golgi stack membrane. The protein resides in the secreted. It catalyses the reaction a beta-D-galactoside + CMP-N-acetyl-beta-neuraminate = an N-acetyl-alpha-neuraminyl-(2-&gt;6)-beta-D-galactosyl derivative + CMP + H(+). The protein operates within protein modification; protein glycosylation. In terms of biological role, transfers sialic acid from CMP-sialic acid to galactose-containing acceptor substrates. The polypeptide is Beta-galactoside alpha-2,6-sialyltransferase 1 (St6gal1) (Mus musculus (Mouse)).